Here is a 224-residue protein sequence, read N- to C-terminus: PKHD-type hydroxylase CYB_2270 (224 aa).

The region spanning 78-176 (LIHSILISCY…RYAAVSWVQS (99 aa)) is the Fe2OG dioxygenase domain. His-96, Asp-98, and His-157 together coordinate Fe cation. Arg-167 contributes to the 2-oxoglutarate binding site.

The cofactor is Fe(2+). L-ascorbate serves as cofactor.

This is PKHD-type hydroxylase CYB_2270 from Synechococcus sp. (strain JA-2-3B'a(2-13)) (Cyanobacteria bacterium Yellowstone B-Prime).